Here is a 292-residue protein sequence, read N- to C-terminus: Putative two-component response regulator-like APRR4 (292 aa).

The 116-residue stretch at Arg-43–Val-158 folds into the Response regulatory domain. A disordered region spans residues Val-168 to Arg-215. Residues Lys-179–Pro-191 show a composition bias toward polar residues. The segment at residues Arg-225–Phe-275 is a DNA-binding region (myb-like GARP).

The protein belongs to the ARR-like family. Binds the target DNA as a monomer.

Its subcellular location is the nucleus. In terms of biological role, transcriptional activator that binds specifically to the DNA sequence 5'-[AG]GATT-3'. This is Putative two-component response regulator-like APRR4 (APRR4) from Arabidopsis thaliana (Mouse-ear cress).